A 1488-amino-acid polypeptide reads, in one-letter code: Indigoidine synthase (1488 aa).

An adenylation region spans residues 229-585 (KNRAQRHPEQ…GGDGVARGYL (357 aa)). The Carrier domain maps to 1137-1212 (APRNPLEHQV…KLAAWLSRAR (76 aa)). The residue at position 1172 (serine 1172) is an O-(pantetheine 4'-phosphoryl)serine. Positions 1230 to 1346 (PIYCWPGLGG…ERVAAMNRKA (117 aa)) are thioesterase.

It belongs to the ATP-dependent AMP-binding enzyme family. It depends on pantetheine 4'-phosphate as a cofactor.

The enzyme catalyses 2 FMN + 2 L-glutamine + 2 ATP + O2 = indigoidine + 2 FMNH2 + 2 AMP + 2 diphosphate + 2 H2O. It carries out the reaction FMN + L-glutamine + ATP = 3-amino-1,5-dihydropyridine-2,6-dione + FMNH2 + AMP + diphosphate. The catalysed reaction is 2 3-amino-1,5-dihydropyridine-2,6-dione + O2 = indigoidine + 2 H2O. It functions in the pathway pigment biosynthesis. Functionally, nonribosomal peptide synthetase involved in the biosynthesis of the blue pigment indigoidine, which is implicated in pathogenicity and protection from oxidative stress. Catalyzes the synthesis of the blue pigment using L-Gln as a substrate. Two glutamine molecules are cyclized and oxidized to form indigoidine. The polypeptide is Indigoidine synthase (Dickeya dadantii (strain 3937) (Erwinia chrysanthemi (strain 3937))).